Reading from the N-terminus, the 206-residue chain is Large ribosomal subunit protein uL4 (206 aa).

The interval 43–78 is disordered; it reads ARSGNRKQKDREEVKHTTKKPWRQKGTGRARAGMSS. Residues 49 to 58 show a composition bias toward basic and acidic residues; it reads KQKDREEVKH. The span at 59 to 70 shows a compositional bias: basic residues; sequence TTKKPWRQKGTG.

This sequence belongs to the universal ribosomal protein uL4 family. In terms of assembly, part of the 50S ribosomal subunit.

In terms of biological role, one of the primary rRNA binding proteins, this protein initially binds near the 5'-end of the 23S rRNA. It is important during the early stages of 50S assembly. It makes multiple contacts with different domains of the 23S rRNA in the assembled 50S subunit and ribosome. Functionally, forms part of the polypeptide exit tunnel. The chain is Large ribosomal subunit protein uL4 from Cupriavidus metallidurans (strain ATCC 43123 / DSM 2839 / NBRC 102507 / CH34) (Ralstonia metallidurans).